The chain runs to 239 residues: Ribosomal RNA small subunit methyltransferase G (239 aa).

S-adenosyl-L-methionine-binding positions include Gly77, Phe82, 128–129 (AE), and Arg146. Residues 215–239 (DKKRQTPKKYPRKPGTPNKTPLLEK) form a disordered region.

This sequence belongs to the methyltransferase superfamily. RNA methyltransferase RsmG family.

It is found in the cytoplasm. In terms of biological role, specifically methylates the N7 position of guanine in position 535 of 16S rRNA. The protein is Ribosomal RNA small subunit methyltransferase G of Staphylococcus aureus (strain bovine RF122 / ET3-1).